The following is a 155-amino-acid chain: S-ribosylhomocysteine lyase (155 aa).

3 residues coordinate Fe cation: histidine 57, histidine 61, and cysteine 124.

Belongs to the LuxS family. As to quaternary structure, homodimer. The cofactor is Fe cation.

The catalysed reaction is S-(5-deoxy-D-ribos-5-yl)-L-homocysteine = (S)-4,5-dihydroxypentane-2,3-dione + L-homocysteine. Involved in the synthesis of autoinducer 2 (AI-2) which is secreted by bacteria and is used to communicate both the cell density and the metabolic potential of the environment. The regulation of gene expression in response to changes in cell density is called quorum sensing. Catalyzes the transformation of S-ribosylhomocysteine (RHC) to homocysteine (HC) and 4,5-dihydroxy-2,3-pentadione (DPD). The polypeptide is S-ribosylhomocysteine lyase (Listeria monocytogenes serotype 4b (strain CLIP80459)).